Reading from the N-terminus, the 28-residue chain is KRGFLDVIKHVGKAALSVVSHLINEGEH.

E25 carries the post-translational modification Glutamic acid 1-amide. The propeptide occupies E27–H28.

Expressed by the skin glands.

It localises to the secreted. Its function is as follows. Has antimicrobial activity. The protein is Cruzioseptin-4 of Cruziohyla calcarifer (Splendid leaf frog).